A 693-amino-acid chain; its full sequence is Tegument protein UL47 (693 aa).

Disordered regions lie at residues 1-32 (MSAREPAGRRRRASTRPRASPVADEPAGDGVG) and 48-126 (ELEA…GYLG). Positions 48-57 (ELEALEEMAG) are enriched in acidic residues. The RNA-binding stretch occupies residues 50 to 75 (EALEEMAGDEPPVRRRREGPRARRRR). Residues 63-75 (RRRREGPRARRRR) carry the Nuclear localization signal motif. Residues 63–75 (RRRREGPRARRRR) show a composition bias toward basic residues. The Nuclear export signal signature appears at 647–670 (SVLGPGVRVVDIMSQFRKLLMGDE).

It belongs to the alphaherpesvirinae HHV-1 UL47 family. As to quaternary structure, interacts with US3 kinase. Interacts with UL31 and UL34; these interactions seem important for efficient virion nuclear egress. Interacts with UL41/VHS. Phosphorylated by US3. This phosphorylation is required for proper nuclear localization.

The protein localises to the virion tegument. The protein resides in the host nucleus. Its subcellular location is the host cytoplasm. In terms of biological role, tegument protein that can bind to various RNA transcripts. Plays a role in the attenuation of selective viral and cellular mRNA degradation by modulating the activity of host shutoff RNase UL41/VHS. Also plays a role in the primary envelopment of virions in the perinuclear space, probably by interacting with two nuclear egress proteins UL31 and UL34. The protein is Tegument protein UL47 of Human herpesvirus 1 (strain F) (HHV-1).